The chain runs to 30 residues: Cyclotide hyen-C (30 aa).

Positions 1 to 30 (GTHPCQETCVTSTRCSTQGCHCNWPICFKN) form a cross-link, cyclopeptide (Gly-Asn). Intrachain disulfides connect cysteine 5-cysteine 20, cysteine 9-cysteine 22, and cysteine 15-cysteine 27.

Post-translationally, this is a cyclic peptide. Detected in stems (at protein level).

Its function is as follows. Probably participates in a plant defense mechanism. Does not display any cytotoxic activity towards K562, HeLa, MCF-7, HUVEC or red blood cells. Does not bind to phospholipd membranes containing 1-palmitoyl 2-oleoyl phosphatidylcholine (POPC) or 1-palmitoyl-2-oleophosphatidylethanolamine (POPE). This chain is Cyclotide hyen-C, found in Pigea enneasperma (Spade flower).